A 221-amino-acid polypeptide reads, in one-letter code: MRSDPEILVLGIGNLLWADEGFGVRAVEALQRHWVMSSNVQLLDGGTQGIYLVDRVRKADVLVVFDAVDYGLPPGTMKRVEDDEVPRFLGAKKMSLHQTGFQEVLALAAMLGDYPKHLLLIGVQPVELDDFGGSLRPQIKERITPAIEMALEYLAQFGVVARRREDSTVDSPHLPHPSLDLIAYESGRPGPEIACRIGDERVLTSLSARTVQPGNPHGDRQ.

Positions 20, 66, and 97 each coordinate Ni(2+).

The protein belongs to the peptidase A31 family.

Not known. Could be involved in the processing of hydrogenase. This is Hydrogenase expression/formation protein HupD (hupD) from Thiocapsa roseopersicina.